We begin with the raw amino-acid sequence, 203 residues long: Dephospho-CoA kinase (203 aa).

The DPCK domain maps to 6-203; sequence ILGLTGGIGS…FYLTLRGGRA (198 aa). 14–19 is an ATP binding site; sequence GSGKSA.

Belongs to the CoaE family.

The protein localises to the cytoplasm. It catalyses the reaction 3'-dephospho-CoA + ATP = ADP + CoA + H(+). It functions in the pathway cofactor biosynthesis; coenzyme A biosynthesis; CoA from (R)-pantothenate: step 5/5. Catalyzes the phosphorylation of the 3'-hydroxyl group of dephosphocoenzyme A to form coenzyme A. The protein is Dephospho-CoA kinase of Pseudomonas aeruginosa (strain ATCC 15692 / DSM 22644 / CIP 104116 / JCM 14847 / LMG 12228 / 1C / PRS 101 / PAO1).